The following is a 717-amino-acid chain: P-loop NTPase domain-containing protein LPA1 homolog 2 (717 aa).

2 disordered regions span residues 235–259 and 532–629; these read KKLK…SSTT and HYSS…DTIS. 2 stretches are compositionally biased toward polar residues: residues 243 to 259 and 532 to 545; these read VNSN…SSTT and HYSS…TSDG. Positions 559 to 582 are enriched in acidic residues; it reads SDEDDEEGDDDFHEPDSDEDLSDN. Over residues 583–602 the composition is skewed to basic and acidic residues; the sequence is NDERNRDEIGSVDEESTKSD.

Its function is as follows. May be not required for the accumulation of phytic acid in seeds. Phytic acid is the primary storage form of phosphorus in cereal grains and other plant seeds. The polypeptide is P-loop NTPase domain-containing protein LPA1 homolog 2 (Arabidopsis thaliana (Mouse-ear cress)).